We begin with the raw amino-acid sequence, 171 residues long: Lipoprotein signal peptidase (171 aa).

Helical transmembrane passes span 15–35 (WLWL…IVMD), 47–67 (VLPF…SFLS), 72–92 (WQRW…AYWM), and 107–127 (ALII…GFVV). Residues D128 and D146 contribute to the active site. Residues 141–161 (AFNLADSTICIGAAMIILDGF) form a helical membrane-spanning segment.

Belongs to the peptidase A8 family.

Its subcellular location is the cell inner membrane. The enzyme catalyses Release of signal peptides from bacterial membrane prolipoproteins. Hydrolyzes -Xaa-Yaa-Zaa-|-(S,diacylglyceryl)Cys-, in which Xaa is hydrophobic (preferably Leu), and Yaa (Ala or Ser) and Zaa (Gly or Ala) have small, neutral side chains.. It functions in the pathway protein modification; lipoprotein biosynthesis (signal peptide cleavage). Its function is as follows. This protein specifically catalyzes the removal of signal peptides from prolipoproteins. The chain is Lipoprotein signal peptidase from Vibrio cholerae serotype O1 (strain ATCC 39541 / Classical Ogawa 395 / O395).